Reading from the N-terminus, the 480-residue chain is tRNA (uracil-5-)-methyltransferase homolog B (480 aa).

Residues Gln-299, Glu-349, and Asn-399 each contribute to the S-adenosyl-L-methionine site. The active-site Nucleophile is Cys-427. Glu-473 serves as the catalytic Proton acceptor.

The protein belongs to the class I-like SAM-binding methyltransferase superfamily. RNA M5U methyltransferase family.

It localises to the mitochondrion. It carries out the reaction uridine(54) in tRNA + S-adenosyl-L-methionine = 5-methyluridine(54) in tRNA + S-adenosyl-L-homocysteine + H(+). The catalysed reaction is a uridine in 12S rRNA + S-adenosyl-L-methionine = a 5-methyluridine in 12S rRNA + S-adenosyl-L-homocysteine + H(+). Mitochondrial S-adenosyl-L-methionine-dependent methyltransferase that catalyzes the formation of 5-methyl-uridine in tRNAs and 12S rRNA. Catalyzes the methylation of uridine at position 54 (m5U54) in all tRNAs. Specifically methylates the uridine in position 429 of 12S rRNA (m5U429). Does not affect RNA stability or mitochondrial translation. The sequence is that of tRNA (uracil-5-)-methyltransferase homolog B (trmt2b) from Danio rerio (Zebrafish).